The sequence spans 587 residues: GTPase-activating protein skywalker (587 aa).

The a 1,2-diacyl-sn-glycero-3-phospho-(1D-myo-inositol) site is built by lysine 75 and arginine 79. Residues 84–275 (PINSPIRAQL…RIMDCYFHEG (192 aa)) enclose the Rab-GAP TBC domain. A 1,2-diacyl-sn-glycero-3-phospho-(1D-myo-inositol)-binding positions include lysine 277, arginine 281, and 335 to 339 (RGLST). The 178-residue stretch at 408-585 (TWTDRQFLFT…IRVLEVYGFV (178 aa)) folds into the TLDc domain.

Detected in the larval ventral nerve cord and neuromuscular junction boutons (at protein level).

It is found in the cytoplasmic vesicle. The protein resides in the secretory vesicle. Its subcellular location is the synaptic vesicle membrane. It localises to the endosome membrane. Its function is as follows. GTPase-activating protein (GAP) for Rab35 which regulates synaptic vesicle (SV) protein recycling and turnover at the neuromuscular junction boutons and possibly ventral nerve cord via endosomal trafficking. Inhibits Rab35-mediated endosomal sorting which traffics old or dysfunctional SV proteins through a degradative endolysosomal route that involves the ESCRT pathway and the HOPS complex members dor, vps39 and rab7. This function is essential for preventing excessive degradation and turnover of vesicles from the readily releasable pool which leads to increased neurotransmission and eventually neurodegeneration. Preferentially binds phosphoinositides phosphorylated at the D5 position of the inositol ring, such as phosphatidylinositol 4,5-bisphosphate (PIP2) and phosphatidylinositol 3,4,5-trisphosphate (PIP3). Binding to phosphoinositides and thus membrane-association, is required for its function in regulating the turnover of synaptic-vesicle proteins. It is therefore likely that it is recruited to vesicle membranes with high phosphoinositide content and thereby selectively prevents endolysosomal degradation of these vesicles. This chain is GTPase-activating protein skywalker, found in Drosophila melanogaster (Fruit fly).